A 343-amino-acid polypeptide reads, in one-letter code: Ribosomal RNA small subunit methyltransferase, chloroplastic (343 aa).

Residues 1–48 (MMNAVITSATINCNSLSPSWTCGDNSPSKLLLGEISAALSRRRTVKVS) constitute a chloroplast transit peptide. S-adenosyl-L-methionine-binding residues include His-78, Met-80, Gly-105, Glu-126, Asp-151, and Asn-183.

This sequence belongs to the class I-like SAM-binding methyltransferase superfamily. rRNA adenine N(6)-methyltransferase family.

The protein localises to the plastid. It is found in the chloroplast. Required for methylation of the 3' adenosines in the small subunit of plastid rRNA. Essential for chloroplast biogenesis at low temperatures. In Arabidopsis thaliana (Mouse-ear cress), this protein is Ribosomal RNA small subunit methyltransferase, chloroplastic.